The sequence spans 512 residues: Envelope glycoprotein (512 aa).

Residues 1-15 (MFLQTALLLLSLGVA) form the signal peptide. N-linked (GlcNAc...) asparagine; by host glycans are attached at residues Asn-185, Asn-263, Asn-289, Asn-378, and Asn-416. A helical transmembrane segment spans residues 479–502 (GQLGGLLYGNIGVYLLIAFAFVLL).

It localises to the virion membrane. In terms of biological role, attaches the virus to host cellular receptor and later induces fusion of virion with host membrane. This chain is Envelope glycoprotein, found in Thogoto virus (isolate SiAr 126) (Tho).